A 521-amino-acid chain; its full sequence is HTH-type transcriptional regulatory protein TyrR (521 aa).

One can recognise an ACT domain in the interval 2–72; it reads RLEVFCQDRI…GVTDVRTVPY (71 aa). The PAS domain occupies 78–120; that stretch reads EHRVLSALLVAMPEPVFSVDLRTKVELANPAAQNLFNLDENKI. Residues 207–436 enclose the Sigma-54 factor interaction domain; that stretch reads IVAVTPRMRQ…LKNALYRALT (230 aa). ATP contacts are provided by residues 235-242 and 298-307; these read GDTGTGKD and ANGGSVLLDE. The H-T-H motif DNA-binding region spans 489–509; it reads STRKLAKRLGVSHTAIANKLR.

Homodimer. In presence of tyrosine (or high concentrations of phenylalanine or tryptophan) and ATP, it self-associates to form an hexamer.

It is found in the cytoplasm. Dual transcriptional regulator of the TyrR regulon, which includes a number of genes coding for proteins involved in the biosynthesis or transport of the three aromatic amino acids, phenylalanine, tyrosine and tryptophan. These three aromatic amino acids act as effectors which bind to the TyrR protein to form an active regulatory protein. Acts by binding specifically to TyrR boxes in the promoter region of the target genes. The polypeptide is HTH-type transcriptional regulatory protein TyrR (Enterobacter agglomerans (Erwinia herbicola)).